A 427-amino-acid chain; its full sequence is Glutamyl-tRNA(Gln) amidotransferase subunit D (427 aa).

Residues glutamate 74–asparagine 407 enclose the Asparaginase/glutaminase domain. Active-site residues include threonine 84, threonine 160, aspartate 161, and lysine 240.

This sequence belongs to the asparaginase 1 family. GatD subfamily. In terms of assembly, heterodimer of GatD and GatE.

The enzyme catalyses L-glutamyl-tRNA(Gln) + L-glutamine + ATP + H2O = L-glutaminyl-tRNA(Gln) + L-glutamate + ADP + phosphate + H(+). Allows the formation of correctly charged Gln-tRNA(Gln) through the transamidation of misacylated Glu-tRNA(Gln) in organisms which lack glutaminyl-tRNA synthetase. The reaction takes place in the presence of glutamine and ATP through an activated gamma-phospho-Glu-tRNA(Gln). The GatDE system is specific for glutamate and does not act on aspartate. In Aeropyrum pernix (strain ATCC 700893 / DSM 11879 / JCM 9820 / NBRC 100138 / K1), this protein is Glutamyl-tRNA(Gln) amidotransferase subunit D.